Consider the following 445-residue polypeptide: Baccatin III:3-amino-3-phenylpropanoyltransferase (445 aa).

This sequence belongs to the plant acyltransferase family.

The enzyme catalyses (3R)-3-amino-3-phenylpropanoyl-CoA + baccatin III = 3'-N-debenzoyl-2'-deoxytaxol + CoA. The protein operates within alkaloid biosynthesis; taxol biosynthesis. Acyltransferase involved in taxol biosynthesis. Catalyzes the selective 13-O-acylation of baccatin III with (3R)-3-amino-3-phenylpropanoyl-CoA as the acyl donor to form 3'-N-debenzoyl-2'-deoxytaxol. The chain is Baccatin III:3-amino-3-phenylpropanoyltransferase from Taxus cuspidata (Japanese yew).